A 282-amino-acid polypeptide reads, in one-letter code: MSTYLIGDVHGCYDELIALLAQVEFDPRRDTLWLTGDLVARGPGSLEVLRYVKSLGDSVRLVLGNHDLHLLAVFAGISRNKPKDRLKPLLEAPDADELLNWLRRQPLLQVDEEKKLVMAHAGITPQWDLETAQQCARDVEAVLSSDSYPFFLDAMYGDMPNHWSNELSGLARLRFISNAFTRMRYCFPNGQLDMYSKEAPEDAPAPLKPWFAIPGPVSNAYSIAFGHWASLEGRGTPEGIYALDTGCCWGGELTCLRWEDKQYFTQPSNRQKSLDEGEAVAS.

It belongs to the Ap4A hydrolase family.

It catalyses the reaction P(1),P(4)-bis(5'-adenosyl) tetraphosphate + H2O = 2 ADP + 2 H(+). Hydrolyzes diadenosine 5',5'''-P1,P4-tetraphosphate to yield ADP. This chain is Bis(5'-nucleosyl)-tetraphosphatase, symmetrical, found in Klebsiella pneumoniae subsp. pneumoniae (strain ATCC 700721 / MGH 78578).